The primary structure comprises 382 residues: Gap junction alpha-1 protein (382 aa).

The Cytoplasmic portion of the chain corresponds to 2-23 (GDWSALGKLLDKVQAYSTAGGK). S5 carries the post-translational modification Phosphoserine. Residues 24–44 (VWLSVLFIFRILLLGTAVESA) traverse the membrane as a helical segment. Topologically, residues 45–76 (WGDEQSAFRCNTQQPGCENVCYDKSFPISHVR) are extracellular. 2 cysteine pairs are disulfide-bonded: C54-C192 and C187-C198. Residues 77 to 97 (FWVLQIIFVSVPTLLYLAHVF) traverse the membrane as a helical segment. At 98–155 (YVMRKEEKLNKKEEELKVAQTDGVNVEMHLKQIEIKKFKYGIEEHGKVKMRGGLLRTY) the chain is on the cytoplasmic side. Residue K144 forms a Glycyl lysine isopeptide (Lys-Gly) (interchain with G-Cter in SUMO) linkage. The chain crosses the membrane as a helical span at residues 156–176 (IISILFKSVFEVAFLLIQWYI). Over 177–207 (YGFSLSAVYTCKRDPCPHQVDCFLSRPTEKT) the chain is Extracellular. A helical membrane pass occupies residues 208-228 (IFIIFMLVVSLVSLALNIIEL). At 229 to 382 (FYAFFKGVKD…SRPRPDDLEI (154 aa)) the chain is on the cytoplasmic side. A Glycyl lysine isopeptide (Lys-Gly) (interchain with G-Cter in SUMO) cross-link involves residue K237. The interaction with NOV stretch occupies residues 244 to 382 (SDPYHATTGP…SRPRPDDLEI (139 aa)). Residue Y247 is modified to Phosphotyrosine. 3 positions are modified to phosphoserine: S255, S257, and S262. The tract at residues 264-382 (KYAYFNGCSS…SRPRPDDLEI (119 aa)) is interaction with UBQLN4. The residue at position 271 (C271) is an S-nitrosocysteine. T275 carries the post-translational modification Phosphothreonine. Phosphoserine is present on residues S306 and S314. The segment covering 317–332 (QNRMGQAGSTISNSHA) has biased composition (polar residues). A disordered region spans residues 317–382 (QNRMGQAGST…SRPRPDDLEI (66 aa)). S325 bears the Phosphoserine; by CK1 mark. The residue at position 326 (T326) is a Phosphothreonine. A phosphoserine; by CK1 mark is found at S328 and S330. A compositionally biased stretch (basic and acidic residues) spans 342-351 (QNSKKLDAGH). A phosphoserine mark is found at S344 and S365. Residues 362–374 (RPSSRASSRASSR) are compositionally biased toward low complexity. S368 is modified (phosphoserine; by PKC/PRKCG and PKC/PRKCD). Residues S369 and S373 each carry the phosphoserine modification.

This sequence belongs to the connexin family. Alpha-type (group II) subfamily. As to quaternary structure, a connexon is composed of a hexamer of connexins. Interacts with SGSM3. Interacts with RIC1/CIP150. Interacts with CNST and CSNK1D. Interacts (via C-terminus) with TJP1. Interacts (via C-terminus) with SRC (via SH3 domain). Interacts (not ubiquitinated) with UBQLN4 (via UBA domain). Interacts with NOV. Interacts with TMEM65. Interacts with ANK3/ANKG and PKP2. In terms of processing, phosphorylation at Ser-325, Ser-328 and Ser-330 by CK1 modulates gap junction assembly. Phosphorylated at Ser-368 by PRKCG; phosphorylation induces disassembly of gap junction plaques and inhibition of gap junction activity. Phosphorylation at Ser-368 by PRKCD triggers its internalization into small vesicles leading to proteasome-mediated degradation. Sumoylated with SUMO1, SUMO2 and SUMO3, which may regulate the level of functional Cx43 gap junctions at the plasma membrane. May be desumoylated by SENP1 or SENP2. Post-translationally, S-nitrosylation at Cys-271 is enriched at the muscle endothelial gap junction in arteries, it augments channel permeability and may regulate of smooth muscle cell to endothelial cell communication. In terms of processing, acetylated in the developing cortex; leading to delocalization from the cell membrane.

Its subcellular location is the cell membrane. The protein resides in the cell junction. It is found in the gap junction. The protein localises to the endoplasmic reticulum. Functionally, gap junction protein that acts as a regulator of bladder capacity. A gap junction consists of a cluster of closely packed pairs of transmembrane channels, the connexons, through which materials of low MW diffuse from one cell to a neighboring cell. May play a critical role in the physiology of hearing by participating in the recycling of potassium to the cochlear endolymph. Negative regulator of bladder functional capacity: acts by enhancing intercellular electrical and chemical transmission, thus sensitizing bladder muscles to cholinergic neural stimuli and causing them to contract. May play a role in cell growth inhibition through the regulation of NOV expression and localization. Plays an essential role in gap junction communication in the ventricles. The polypeptide is Gap junction alpha-1 protein (GJA1) (Sus scrofa (Pig)).